Consider the following 589-residue polypeptide: Protein PAF1 homolog (589 aa).

Residues 1–54 (MASYRPPYPPLPQPPSQNSLAPPPPPPSLPPPVPPPPPSHQPYSYPPPPPPPPH) are compositionally biased toward pro residues. Disordered stretches follow at residues 1–180 (MASY…PLLT) and 542–589 (GVYS…DYSE). Residues 55 to 65 (AYYQQGPHYPQ) are compositionally biased toward low complexity. Residues 71 to 87 (APPPPPPPSAPPPLVPD) show a composition bias toward pro residues. Basic and acidic residues predominate over residues 88–116 (PPRHQGPNDHEKGASKQVGRRERAKPDPS). Basic residues predominate over residues 117–127 (KHHHRSHLPHS). Residues 126–159 (HSKKIETEEERRLRKKRELEKQRQDEKHRQQMKN) are a coiled coil. Residues 128–154 (KKIETEEERRLRKKRELEKQRQDEKHR) show a composition bias toward basic and acidic residues.

Belongs to the PAF1 family. Component of the nuclear PAF1 complex (PAF1C), which consists of VIP2/ELF7/PAF1, VIP3/SKI8/WDR61, VIP4/LEO1, VIP5/RTF1, VIP6/ELF8/CTR9 and CDC73. In terms of tissue distribution, expressed in roots, leaves and shoot apex.

It localises to the nucleus. In terms of biological role, component of the PAF1 complex (PAF1C) which is involved in histone modifications such as methylation on histone H3 'Lys-4' (H3K4me3). Involved in regulation of flowering time. Required for the expression of the flowering repressors and MAD-box genes FLC, AGL27/FLM and AGL31/MAF2. Required for histone H3 trimethylation on 'Lys-4' H3K4me3 at the FLC and AGL27/FLM loci. Involved in the control of seed dormancy and germination. This is Protein PAF1 homolog from Arabidopsis thaliana (Mouse-ear cress).